An 82-amino-acid chain; its full sequence is UPF0153 protein VC_1057 (82 aa).

It belongs to the UPF0153 family.

The sequence is that of UPF0153 protein VC_1057 from Vibrio cholerae serotype O1 (strain ATCC 39315 / El Tor Inaba N16961).